Consider the following 416-residue polypeptide: Probable pectate lyase 8 (416 aa).

A signal peptide spans 1–24 (MAVTKLILFASALLLTALFIGVNA). 3 N-linked (GlcNAc...) asparagine glycosylation sites follow: Asn-23, Asn-28, and Asn-52. Positions 214, 238, and 242 each coordinate Ca(2+). Arg-294 is a catalytic residue.

The protein belongs to the polysaccharide lyase 1 family. It depends on Ca(2+) as a cofactor.

It catalyses the reaction Eliminative cleavage of (1-&gt;4)-alpha-D-galacturonan to give oligosaccharides with 4-deoxy-alpha-D-galact-4-enuronosyl groups at their non-reducing ends.. It participates in glycan metabolism; pectin degradation; 2-dehydro-3-deoxy-D-gluconate from pectin: step 2/5. In Arabidopsis thaliana (Mouse-ear cress), this protein is Probable pectate lyase 8.